A 184-amino-acid polypeptide reads, in one-letter code: GTP cyclohydrolase 1 (184 aa).

Zn(2+) is bound by residues Cys75, His78, and Cys146.

It belongs to the GTP cyclohydrolase I family. In terms of assembly, homomer.

The catalysed reaction is GTP + H2O = 7,8-dihydroneopterin 3'-triphosphate + formate + H(+). It participates in cofactor biosynthesis; 7,8-dihydroneopterin triphosphate biosynthesis; 7,8-dihydroneopterin triphosphate from GTP: step 1/1. The chain is GTP cyclohydrolase 1 from Streptococcus pneumoniae (strain Taiwan19F-14).